Here is a 373-residue protein sequence, read N- to C-terminus: Galactoside alpha-(1,2)-fucosyltransferase 1 (373 aa).

The Cytoplasmic segment spans residues 1–12 (MWPPSRRQLCLA). A helical; Signal-anchor for type II membrane protein transmembrane segment spans residues 13-29 (FLLVCALSAFSFLLHLH). Residues 30–373 (QDLFRNGLAL…GSWRPWRFLG (344 aa)) are Lumenal-facing. Asn66, Asn301, and Asn327 each carry an N-linked (GlcNAc...) asparagine glycan.

Belongs to the glycosyltransferase 11 family. In terms of tissue distribution, brain.

It localises to the golgi apparatus. The protein resides in the golgi stack membrane. It carries out the reaction a beta-D-galactosyl-(1-&gt;4)-N-acetyl-beta-D-glucosaminyl derivative + GDP-beta-L-fucose = an alpha-L-Fuc-(1-&gt;2)-beta-D-Gal-(1-&gt;4)-beta-D-GlcNAc derivative + GDP + H(+). The enzyme catalyses a ganglioside GA1 + GDP-beta-L-fucose = a ganglioside Fuc-GA1 + GDP + H(+). It catalyses the reaction a beta-D-Gal-(1-&gt;3)-beta-D-GlcNAc-(1-&gt;3)-beta-D-Gal-(1-&gt;4)-beta-D-Glc-(1&lt;-&gt;1')-Cer(d18:1(4E)) + GDP-beta-L-fucose = alpha-L-fucosyl-(1-&gt;2)- beta-D-galactosyl-(1-&gt;3)-N-acetyl-beta-D-glucosaminyl-(1-&gt;3)-beta-D-galactosyl-(1-&gt;4)-beta-D-glucosyl-(1&lt;-&gt;1')-N-acylsphing-4-enine + GDP + H(+). The catalysed reaction is a neolactoside nLc4Cer(d18:1(4E)) + GDP-beta-L-fucose = a neolactoside IV(2)-alpha-Fuc-nLc4Cer(d18:1(4E)) + GDP + H(+). It carries out the reaction a ganglioside GM1 + GDP-beta-L-fucose = a ganglioside Fuc-GM1 + GDP + H(+). The enzyme catalyses beta-D-galactosyl-(1-&gt;3)-N-acetyl-D-galactosamine + GDP-beta-L-fucose = alpha-L-fucosyl-(1-&gt;2)-beta-D-galactosyl-(1-&gt;3)-N-acetyl-D-galactosamine + GDP + H(+). Its pathway is protein modification; protein glycosylation. Catalyzes the transfer of L-fucose, from a guanosine diphosphate-beta-L-fucose, to the terminal galactose residue of glycoconjugates through an alpha(1,2) linkage leading to H antigen synthesis that is an intermediate substrate in the synthesis of ABO blood group antigens. H antigen is essential for maturation of the glomerular layer of the main olfactory bulb, in cell migration and early cell-cell contacts during tumor associated angiogenesis. Preferentially fucosylates soluble lactose and to a lesser extent fucosylates glycolipids gangliosides GA1 and GM1a. The chain is Galactoside alpha-(1,2)-fucosyltransferase 1 from Oryctolagus cuniculus (Rabbit).